Consider the following 143-residue polypeptide: Putative nickel-responsive regulator (143 aa).

Ni(2+) is bound by residues His-82, His-97, His-99, and Cys-105.

Belongs to the transcriptional regulatory CopG/NikR family. Requires Ni(2+) as cofactor.

Functionally, transcriptional regulator. In Helicobacter hepaticus (strain ATCC 51449 / 3B1), this protein is Putative nickel-responsive regulator.